The sequence spans 142 residues: Large ribosomal subunit protein uL13 (142 aa).

It belongs to the universal ribosomal protein uL13 family. In terms of assembly, part of the 50S ribosomal subunit.

Its function is as follows. This protein is one of the early assembly proteins of the 50S ribosomal subunit, although it is not seen to bind rRNA by itself. It is important during the early stages of 50S assembly. This is Large ribosomal subunit protein uL13 from Edwardsiella ictaluri (strain 93-146).